The following is a 780-amino-acid chain: Pendrin (780 aa).

Topologically, residues 1 to 87 are cytoplasmic; that stretch reads MAAPGGRSEP…YRVKEWLLSD (87 aa). The chain crosses the membrane as a helical span at residues 88–108; the sequence is VISGVSTGLVATLQGMAYALL. Ala-109 is a topological domain (extracellular). Residues 110 to 130 traverse the membrane as a helical segment; the sequence is AVPVGYGLYSAFFPILTYFIF. The Cytoplasmic segment spans residues 131–135; the sequence is GTSRH. Residues 136-156 form a helical membrane-spanning segment; sequence ISVGPFPVVSLMVGSVVLSMA. Residues 157-191 are Extracellular-facing; that stretch reads PDEHFLVSSSNGTVLNTTMIDTAARDTARVLIASA. The chain crosses the membrane as a helical span at residues 192 to 212; it reads LTLLVGIIQLIFGGLQIGFIV. Residues 213-218 are Cytoplasmic-facing; it reads RYLADP. Residues 219–239 form a helical membrane-spanning segment; the sequence is LVGGFTTAAAFQVLVSQLKIV. Over 240–263 the chain is Extracellular; it reads LNVSTKNYNGVLSIIYTLVEIFQN. The chain crosses the membrane as a helical span at residues 264 to 284; that stretch reads IGDTNLADFTAGLLTIVVCMA. Residues 285-295 lie on the Cytoplasmic side of the membrane; the sequence is VKELNDRFRHK. Residues 296–316 form a helical membrane-spanning segment; that stretch reads IPVPIPIEVIVTIIATAISYG. Over 317 to 344 the chain is Extracellular; sequence ANLEKNYNAGIVKSIPRGFLPPELPPVS. The chain crosses the membrane as a helical span at residues 345-365; it reads LFSEMLAASFSIAVVAYAIAV. The Cytoplasmic portion of the chain corresponds to 366 to 384; that stretch reads SVGKVYATKYDYTIDGNQE. A helical transmembrane segment spans residues 385 to 405; the sequence is FIAFGISNIFSGFFSCFVATT. At 406–421 the chain is on the extracellular side; it reads ALSRTAVQESTGGKTQ. The chain crosses the membrane as a helical span at residues 422-442; the sequence is VAGIISAAIVMIAILALGKLL. The Cytoplasmic portion of the chain corresponds to 443–448; it reads EPLQKS. Residues 449 to 469 traverse the membrane as a helical segment; it reads VLAAVVIANLKGMFMQLCDIP. At 470-486 the chain is on the extracellular side; it reads RLWRQNKIDAVIWVFTC. The chain crosses the membrane as a helical span at residues 487–507; sequence IVSIILGLDLGLLAGLIFGLL. Residues 508–780 lie on the Cytoplasmic side of the membrane; that stretch reads TVVLRVQFPS…QDEAMRTLAS (273 aa). The 195-residue stretch at 535 to 729 folds into the STAS domain; the sequence is NYKNIEEPQG…LTVHDAILYL (195 aa).

Belongs to the SLC26A/SulP transporter (TC 2.A.53) family. In terms of assembly, interacts with IQGAP1; this interaction enhances the chloride-bicarbonate exchange activity of SLC26A4. As to expression, highly expressed in the kidney (at protein level). High expression in adult thyroid, lower expression in adult and fetal kidney and fetal brain. Not expressed in other tissues.

It is found in the cell membrane. Its subcellular location is the apical cell membrane. The enzyme catalyses chloride(in) = chloride(out). It carries out the reaction iodide(out) = iodide(in). The catalysed reaction is hydrogencarbonate(in) + chloride(out) = hydrogencarbonate(out) + chloride(in). It catalyses the reaction iodide(in) + hydrogencarbonate(out) = iodide(out) + hydrogencarbonate(in). The enzyme catalyses iodide(in) + chloride(out) = iodide(out) + chloride(in). It carries out the reaction formate(in) + chloride(out) = formate(out) + chloride(in). Functionally, sodium-independent transporter of chloride and iodide. Mediates electroneutral chloride-bicarbonate, chloride-iodide and chloride-formate exchange with 1:1 stoichiometry. Mediates electroneutral iodide-bicarbonate exchange. The protein is Pendrin (SLC26A4) of Homo sapiens (Human).